We begin with the raw amino-acid sequence, 217 residues long: Small ribosomal subunit protein uS3c (217 aa).

The region spanning V47–A119 is the KH type-2 domain.

The protein belongs to the universal ribosomal protein uS3 family. Part of the 30S ribosomal subunit.

It is found in the plastid. It localises to the chloroplast. The sequence is that of Small ribosomal subunit protein uS3c (rps3) from Pinus koraiensis (Korean pine).